We begin with the raw amino-acid sequence, 559 residues long: 5'-AMP-activated protein kinase catalytic subunit alpha-1 (559 aa).

Residues 27-279 (YILGDTLGVG…IKDIREHEWF (253 aa)) form the Protein kinase domain. T32 is subject to Phosphothreonine. ATP contacts are provided by residues 33 to 41 (LGVGTFGKV) and K56. Catalysis depends on D150, which acts as the Proton acceptor. The residue at position 183 (T183) is a Phosphothreonine; by LKB1 and CaMKK2. A phosphothreonine mark is found at T269 and T355. The interval 302–381 (EALKEVCEKF…PERVPFLVAE (80 aa)) is AIS. S356 is modified (phosphoserine). Position 360 is a phosphoserine; by ULK1 (S360). T368 is subject to Phosphothreonine; by ULK1. The residue at position 382 (T382) is a Phosphothreonine. A phosphoserine mark is found at S397, S467, and S486. Residues 485-505 (KSGTATPQRSGSVSNYRSCQR) are compositionally biased toward polar residues. The tract at residues 485–536 (KSGTATPQRSGSVSNYRSCQRSDSDAEAQGKSSEVSLTSSVTSLDSSPVDLT) is disordered. Phosphothreonine is present on residues T488 and T490. S496, S508, S524, and S527 each carry phosphoserine. Low complexity predominate over residues 516–535 (SSEVSLTSSVTSLDSSPVDL).

This sequence belongs to the protein kinase superfamily. CAMK Ser/Thr protein kinase family. SNF1 subfamily. AMPK is a heterotrimer of an alpha catalytic subunit (PRKAA1 or PRKAA2), a beta (PRKAB1 or PRKAB2) and a gamma non-catalytic subunits (PRKAG1, PRKAG2 or PRKAG3). Interacts with FNIP1 and FNIP2. As to quaternary structure, (Microbial infection) Interacts with Dengue type 2 virus non-structural protein 1; this interaction promotes the AMPK/ERK/mTOR signaling pathway to induce autophagy. It depends on Mg(2+) as a cofactor. In terms of processing, ubiquitinated. Phosphorylated at Thr-183 by STK11/LKB1 in complex with STE20-related adapter-alpha (STRADA) pseudo kinase and CAB39. Also phosphorylated at Thr-183 by CAMKK2; triggered by a rise in intracellular calcium ions, without detectable changes in the AMP/ATP ratio. CAMKK1 can also phosphorylate Thr-183, but at a much lower level. Dephosphorylated by protein phosphatase 2A and 2C (PP2A and PP2C). Phosphorylated by ULK1 and ULK2; leading to negatively regulate AMPK activity and suggesting the existence of a regulatory feedback loop between ULK1, ULK2 and AMPK. Dephosphorylated by PPM1A and PPM1B. Post-translationally, glycosylated; O-GlcNAcylated by OGT, promoting the AMP-activated protein kinase (AMPK) activity.

The protein localises to the cytoplasm. It localises to the nucleus. It carries out the reaction L-seryl-[protein] + ATP = O-phospho-L-seryl-[protein] + ADP + H(+). The enzyme catalyses L-threonyl-[protein] + ATP = O-phospho-L-threonyl-[protein] + ADP + H(+). The catalysed reaction is L-seryl-[acetyl-CoA carboxylase] + ATP = O-phospho-L-seryl-[acetyl-CoA carboxylase] + ADP + H(+). It catalyses the reaction L-seryl-[3-hydroxy-3-methylglutaryl-coenzyme A reductase] + ATP = O-phospho-L-seryl-[3-hydroxy-3-methylglutaryl-coenzyme A reductase] + ADP + H(+). It carries out the reaction L-seryl-[tau protein] + ATP = O-phospho-L-seryl-[tau protein] + ADP + H(+). The enzyme catalyses L-threonyl-[tau protein] + ATP = O-phospho-L-threonyl-[tau protein] + ADP + H(+). Its activity is regulated as follows. Activated by phosphorylation on Thr-183. Binding of AMP to non-catalytic gamma subunit (PRKAG1, PRKAG2 or PRKAG3) results in allosteric activation, inducing phosphorylation on Thr-183. AMP-binding to gamma subunit also sustains activity by preventing dephosphorylation of Thr-183. ADP also stimulates Thr-183 phosphorylation, without stimulating already phosphorylated AMPK. ATP promotes dephosphorylation of Thr-183, rendering the enzyme inactive. Under physiological conditions AMPK mainly exists in its inactive form in complex with ATP, which is much more abundant than AMP. AMPK is activated by antihyperglycemic drug metformin, a drug prescribed to patients with type 2 diabetes: in vivo, metformin seems to mainly inhibit liver gluconeogenesis. However, metformin can be used to activate AMPK in muscle and other cells in culture or ex vivo. Selectively inhibited by compound C (6-[4-(2-Piperidin-1-yl-ethoxy)-phenyl)]-3-pyridin-4-yl-pyyrazolo[1,5-a] pyrimidine. Activated by resveratrol, a natural polyphenol present in red wine, and S17834, a synthetic polyphenol. Its function is as follows. Catalytic subunit of AMP-activated protein kinase (AMPK), an energy sensor protein kinase that plays a key role in regulating cellular energy metabolism. In response to reduction of intracellular ATP levels, AMPK activates energy-producing pathways and inhibits energy-consuming processes: inhibits protein, carbohydrate and lipid biosynthesis, as well as cell growth and proliferation. AMPK acts via direct phosphorylation of metabolic enzymes, and by longer-term effects via phosphorylation of transcription regulators. Regulates lipid synthesis by phosphorylating and inactivating lipid metabolic enzymes such as ACACA, ACACB, GYS1, HMGCR and LIPE; regulates fatty acid and cholesterol synthesis by phosphorylating acetyl-CoA carboxylase (ACACA and ACACB) and hormone-sensitive lipase (LIPE) enzymes, respectively. Promotes lipolysis of lipid droplets by mediating phosphorylation of isoform 1 of CHKA (CHKalpha2). Regulates insulin-signaling and glycolysis by phosphorylating IRS1, PFKFB2 and PFKFB3. AMPK stimulates glucose uptake in muscle by increasing the translocation of the glucose transporter SLC2A4/GLUT4 to the plasma membrane, possibly by mediating phosphorylation of TBC1D4/AS160. Regulates transcription and chromatin structure by phosphorylating transcription regulators involved in energy metabolism such as CRTC2/TORC2, FOXO3, histone H2B, HDAC5, MEF2C, MLXIPL/ChREBP, EP300, HNF4A, p53/TP53, SREBF1, SREBF2 and PPARGC1A. Acts as a key regulator of glucose homeostasis in liver by phosphorylating CRTC2/TORC2, leading to CRTC2/TORC2 sequestration in the cytoplasm. In response to stress, phosphorylates 'Ser-36' of histone H2B (H2BS36ph), leading to promote transcription. Acts as a key regulator of cell growth and proliferation by phosphorylating FNIP1, TSC2, RPTOR, WDR24 and ATG1/ULK1: in response to nutrient limitation, negatively regulates the mTORC1 complex by phosphorylating RPTOR component of the mTORC1 complex and by phosphorylating and activating TSC2. Also phosphorylates and inhibits GATOR2 subunit WDR24 in response to nutrient limitation, leading to suppress glucose-mediated mTORC1 activation. In response to energetic stress, phosphorylates FNIP1, inactivating the non-canonical mTORC1 signaling, thereby promoting nuclear translocation of TFEB and TFE3, and inducing transcription of lysosomal or autophagy genes. In response to nutrient limitation, promotes autophagy by phosphorylating and activating ATG1/ULK1. In that process, it also activates WDR45/WIPI4. Phosphorylates CASP6, thereby preventing its autoprocessing and subsequent activation. In response to nutrient limitation, phosphorylates transcription factor FOXO3 promoting FOXO3 mitochondrial import. Also acts as a regulator of cellular polarity by remodeling the actin cytoskeleton; probably by indirectly activating myosin. AMPK also acts as a regulator of circadian rhythm by mediating phosphorylation of CRY1, leading to destabilize it. May regulate the Wnt signaling pathway by phosphorylating CTNNB1, leading to stabilize it. Also has tau-protein kinase activity: in response to amyloid beta A4 protein (APP) exposure, activated by CAMKK2, leading to phosphorylation of MAPT/TAU; however the relevance of such data remains unclear in vivo. Also phosphorylates CFTR, EEF2K, KLC1, NOS3 and SLC12A1. Regulates hepatic lipogenesis. Activated via SIRT3, represses sterol regulatory element-binding protein (SREBP) transcriptional activities and ATP-consuming lipogenesis to restore cellular energy balance. Upon stress, regulates mitochondrial fragmentation through phosphorylation of MTFR1L. The sequence is that of 5'-AMP-activated protein kinase catalytic subunit alpha-1 from Homo sapiens (Human).